Consider the following 266-residue polypeptide: Undecaprenyl-diphosphatase 1 (266 aa).

8 helical membrane-spanning segments follow: residues 1 to 21 (MSII…FLPI), 39 to 59 (QGLA…VIYF), 83 to 103 (SKLG…GLLL), 113 to 133 (SAWV…YADA), 141 to 161 (IYQL…VAMI), 189 to 209 (FLLA…ELAL), 218 to 238 (TLLL…YMFL), and 244 to 264 (MGML…IVFL).

It belongs to the UppP family.

It localises to the cell inner membrane. The enzyme catalyses di-trans,octa-cis-undecaprenyl diphosphate + H2O = di-trans,octa-cis-undecaprenyl phosphate + phosphate + H(+). Catalyzes the dephosphorylation of undecaprenyl diphosphate (UPP). Confers resistance to bacitracin. The protein is Undecaprenyl-diphosphatase 1 of Pseudoalteromonas translucida (strain TAC 125).